The chain runs to 270 residues: BPI fold-containing family A member 1 (270 aa).

Residues 1–19 form the signal peptide; the sequence is MFLVGSLVVLCGLLAQSTA. Positions 104-109 are important for surfactant activity and antibacterial properties; sequence LVGGLL. Asn174 is a glycosylation site (N-linked (GlcNAc...) asparagine). Cys196 and Cys238 form a disulfide bridge.

It belongs to the BPI/LBP/Plunc superfamily. Plunc family. In terms of assembly, monomer. Interacts (via N-terminus) with SCNN1B, a subunit of the heterotrimeric epithelial sodium channel (ENaC); this inhibits proteolytic activation of ENaC. As to expression, detected in adult nasal epithelium, heart, lung, spleen, testis and salivary gland, and in embryonic nasal epithelium, lung, salivary gland and thymus.

The protein resides in the secreted. Lipid-binding protein which shows high specificity for the surfactant phospholipid dipalmitoylphosphatidylcholine (DPPC). Plays a role in the innate immune responses of the upper airways. Reduces the surface tension in secretions from airway epithelia and inhibits the formation of biofilm by pathogenic Gram-negative bacteria, such as P.aeruginosa and K.pneumoniae. Negatively regulates proteolytic cleavage of SCNN1G, an event that is required for activation of the epithelial sodium channel (ENaC), and thereby contributes to airway surface liquid homeostasis and proper clearance of mucus. Plays a role in the airway inflammatory response after exposure to irritants. May attract macrophages and neutrophils. This chain is BPI fold-containing family A member 1 (Bpifa1), found in Rattus norvegicus (Rat).